The primary structure comprises 379 residues: Lipoyl synthase, mitochondrial (379 aa).

Positions 106, 111, 117, 137, 141, 144, and 352 each coordinate [4Fe-4S] cluster. Positions 122–341 (EHGTQTATIM…EERGNALGFL (220 aa)) constitute a Radical SAM core domain.

Belongs to the radical SAM superfamily. Lipoyl synthase family. [4Fe-4S] cluster is required as a cofactor.

It is found in the mitochondrion. It carries out the reaction [[Fe-S] cluster scaffold protein carrying a second [4Fe-4S](2+) cluster] + N(6)-octanoyl-L-lysyl-[protein] + 2 oxidized [2Fe-2S]-[ferredoxin] + 2 S-adenosyl-L-methionine + 4 H(+) = [[Fe-S] cluster scaffold protein] + N(6)-[(R)-dihydrolipoyl]-L-lysyl-[protein] + 4 Fe(3+) + 2 hydrogen sulfide + 2 5'-deoxyadenosine + 2 L-methionine + 2 reduced [2Fe-2S]-[ferredoxin]. It functions in the pathway protein modification; protein lipoylation via endogenous pathway; protein N(6)-(lipoyl)lysine from octanoyl-[acyl-carrier-protein]: step 2/2. Catalyzes the radical-mediated insertion of two sulfur atoms into the C-6 and C-8 positions of the octanoyl moiety bound to the lipoyl domains of lipoate-dependent enzymes, thereby converting the octanoylated domains into lipoylated derivatives. The sequence is that of Lipoyl synthase, mitochondrial from Drosophila erecta (Fruit fly).